The primary structure comprises 237 residues: Ribosomal RNA small subunit methyltransferase G (237 aa).

S-adenosyl-L-methionine is bound by residues Gly-76, Phe-81, 128–129, and Arg-147; that span reads IE.

Belongs to the methyltransferase superfamily. RNA methyltransferase RsmG family.

It is found in the cytoplasm. Specifically methylates the N7 position of a guanine in 16S rRNA. This is Ribosomal RNA small subunit methyltransferase G from Prochlorococcus marinus (strain MIT 9301).